The sequence spans 503 residues: Maturase K (503 aa).

The protein belongs to the intron maturase 2 family. MatK subfamily.

The protein resides in the plastid. Its subcellular location is the chloroplast. In terms of biological role, usually encoded in the trnK tRNA gene intron. Probably assists in splicing its own and other chloroplast group II introns. This is Maturase K from Vicia sativa (Spring vetch).